A 145-amino-acid chain; its full sequence is D-aminoacyl-tRNA deacylase (145 aa).

A Gly-cisPro motif, important for rejection of L-amino acids motif is present at residues 137–138; the sequence is GP.

This sequence belongs to the DTD family. Homodimer.

Its subcellular location is the cytoplasm. It carries out the reaction glycyl-tRNA(Ala) + H2O = tRNA(Ala) + glycine + H(+). The catalysed reaction is a D-aminoacyl-tRNA + H2O = a tRNA + a D-alpha-amino acid + H(+). In terms of biological role, an aminoacyl-tRNA editing enzyme that deacylates mischarged D-aminoacyl-tRNAs. Also deacylates mischarged glycyl-tRNA(Ala), protecting cells against glycine mischarging by AlaRS. Acts via tRNA-based rather than protein-based catalysis; rejects L-amino acids rather than detecting D-amino acids in the active site. By recycling D-aminoacyl-tRNA to D-amino acids and free tRNA molecules, this enzyme counteracts the toxicity associated with the formation of D-aminoacyl-tRNA entities in vivo and helps enforce protein L-homochirality. This Shewanella sp. (strain ANA-3) protein is D-aminoacyl-tRNA deacylase.